A 62-amino-acid chain; its full sequence is Ponericin-W-like 32.2 (62 aa).

A signal peptide spans 1–23 (MKCKKQLLVIFFAYFLVVNESEA). Positions 49–62 (RALMKRDLEDIMDP) are excised as a propeptide.

Belongs to the non-disulfide-bridged peptide (NDBP) superfamily. Medium-length antimicrobial peptide (group 3) family. Ponericin-W subfamily. Expressed by the venom gland.

It localises to the secreted. Its subcellular location is the target cell membrane. Functionally, antimicrobial peptide with potent activity against a range of Gram-positive and Gram-negative bacteria. Has high hemolytic activity against erythrocytes. May act by disrupting the integrity of the bacterial cell membrane. This Lychas mucronatus (Chinese swimming scorpion) protein is Ponericin-W-like 32.2.